The primary structure comprises 298 residues: Inosose dehydratase 1 (298 aa).

The protein belongs to the IolE/MocC family. The cofactor is glutathione. It depends on Co(2+) as a cofactor. Mn(2+) is required as a cofactor.

It carries out the reaction scyllo-inosose = 3D-3,5/4-trihydroxycyclohexane-1,2-dione + H2O. It participates in polyol metabolism; myo-inositol degradation into acetyl-CoA; acetyl-CoA from myo-inositol: step 2/7. Its function is as follows. Catalyzes the dehydration of inosose (2-keto-myo-inositol, 2KMI or 2,4,6/3,5-pentahydroxycyclohexanone) to 3D-(3,5/4)-trihydroxycyclohexane-1,2-dione (D-2,3-diketo-4-deoxy-epi-inositol). This Bacillus cereus (strain ZK / E33L) protein is Inosose dehydratase 1.